The following is a 559-amino-acid chain: DNA ligase (559 aa).

E231 contacts ATP. The active-site N6-AMP-lysine intermediate is the K233. The ATP site is built by R238 and E285. Residues E285 and E379 each coordinate Mg(2+). ATP is bound by residues K384 and K399.

The protein belongs to the ATP-dependent DNA ligase family. In terms of assembly, interacts with host TOP2A and TOP2B. Mg(2+) serves as cofactor.

It is found in the host cytoplasm. The catalysed reaction is ATP + (deoxyribonucleotide)n-3'-hydroxyl + 5'-phospho-(deoxyribonucleotide)m = (deoxyribonucleotide)n+m + AMP + diphosphate.. Its function is as follows. DNA ligase that seals nicks in double-stranded DNA during DNA replication, DNA recombination and DNA repair. Recruits cellular topoisomerase II to sites of viral replication and assembly. The chain is DNA ligase (OPG180) from Monkeypox virus.